A 129-amino-acid polypeptide reads, in one-letter code: Selenoprotein M (129 aa).

The signal sequence occupies residues 1-19; the sequence is MARGLAVFFLLAGACLALA. Catalysis depends on nucleophile residues Cys35 and Sec38. Residue Sec38 is a non-standard amino acid, selenocysteine. The tract at residues 107–129 is disordered; it reads KSSKDEQVPEEYQEGPYMEKEEL. Residues 126-129 carry the Prevents secretion from ER motif; that stretch reads KEEL.

Belongs to the selenoprotein M/F family. In terms of tissue distribution, high expression levels observed in hepatopancreas, testis, ovaries and intestine. Also expressed in heart, stomach, gills, cranial ganglia, muscle and hematocytes.

The protein resides in the endoplasmic reticulum. Functionally, may function as a thiol-disulfide oxidoreductase that participates in disulfide bond formation. Involved in the regulation of reproduction during the period of rapid gonadal development. This chain is Selenoprotein M, found in Eriocheir sinensis (Chinese mitten crab).